Here is a 258-residue protein sequence, read N- to C-terminus: Triosephosphate isomerase (258 aa).

9–11 (NWK) contacts substrate. The Electrophile role is filled by H105. E176 acts as the Proton acceptor in catalysis. Substrate-binding residues include G182 and S214.

The protein belongs to the triosephosphate isomerase family. As to quaternary structure, homodimer.

The protein localises to the cytoplasm. It carries out the reaction D-glyceraldehyde 3-phosphate = dihydroxyacetone phosphate. The protein operates within carbohydrate biosynthesis; gluconeogenesis. It participates in carbohydrate degradation; glycolysis; D-glyceraldehyde 3-phosphate from glycerone phosphate: step 1/1. Its function is as follows. Involved in the gluconeogenesis. Catalyzes stereospecifically the conversion of dihydroxyacetone phosphate (DHAP) to D-glyceraldehyde-3-phosphate (G3P). In Mycoplasmopsis agalactiae (strain NCTC 10123 / CIP 59.7 / PG2) (Mycoplasma agalactiae), this protein is Triosephosphate isomerase.